Reading from the N-terminus, the 397-residue chain is Phosphoglycerate kinase (397 aa).

Substrate-binding positions include 25-27, Arg41, 64-67, Arg118, and Arg151; these read DLN and HLGR. Residues Lys202, Glu324, and 350–353 each bind ATP; that span reads GGDT.

It belongs to the phosphoglycerate kinase family. In terms of assembly, monomer.

Its subcellular location is the cytoplasm. It carries out the reaction (2R)-3-phosphoglycerate + ATP = (2R)-3-phospho-glyceroyl phosphate + ADP. The protein operates within carbohydrate degradation; glycolysis; pyruvate from D-glyceraldehyde 3-phosphate: step 2/5. The protein is Phosphoglycerate kinase of Leptothrix cholodnii (strain ATCC 51168 / LMG 8142 / SP-6) (Leptothrix discophora (strain SP-6)).